We begin with the raw amino-acid sequence, 291 residues long: Phosphatidylserine decarboxylase proenzyme (291 aa).

Active-site charge relay system; for autoendoproteolytic cleavage activity residues include aspartate 93, histidine 150, and serine 253. Serine 253 serves as the catalytic Schiff-base intermediate with substrate; via pyruvic acid; for decarboxylase activity. Pyruvic acid (Ser); by autocatalysis is present on serine 253.

The protein belongs to the phosphatidylserine decarboxylase family. PSD-B subfamily. Prokaryotic type I sub-subfamily. Heterodimer of a large membrane-associated beta subunit and a small pyruvoyl-containing alpha subunit. The cofactor is pyruvate. Is synthesized initially as an inactive proenzyme. Formation of the active enzyme involves a self-maturation process in which the active site pyruvoyl group is generated from an internal serine residue via an autocatalytic post-translational modification. Two non-identical subunits are generated from the proenzyme in this reaction, and the pyruvate is formed at the N-terminus of the alpha chain, which is derived from the carboxyl end of the proenzyme. The autoendoproteolytic cleavage occurs by a canonical serine protease mechanism, in which the side chain hydroxyl group of the serine supplies its oxygen atom to form the C-terminus of the beta chain, while the remainder of the serine residue undergoes an oxidative deamination to produce ammonia and the pyruvoyl prosthetic group on the alpha chain. During this reaction, the Ser that is part of the protease active site of the proenzyme becomes the pyruvoyl prosthetic group, which constitutes an essential element of the active site of the mature decarboxylase.

It localises to the cell membrane. The catalysed reaction is a 1,2-diacyl-sn-glycero-3-phospho-L-serine + H(+) = a 1,2-diacyl-sn-glycero-3-phosphoethanolamine + CO2. It functions in the pathway phospholipid metabolism; phosphatidylethanolamine biosynthesis; phosphatidylethanolamine from CDP-diacylglycerol: step 2/2. Its function is as follows. Catalyzes the formation of phosphatidylethanolamine (PtdEtn) from phosphatidylserine (PtdSer). In Alcanivorax borkumensis (strain ATCC 700651 / DSM 11573 / NCIMB 13689 / SK2), this protein is Phosphatidylserine decarboxylase proenzyme.